A 418-amino-acid polypeptide reads, in one-letter code: NADH-quinone oxidoreductase subunit D (418 aa).

Belongs to the complex I 49 kDa subunit family. As to quaternary structure, NDH-1 is composed of 14 different subunits. Subunits NuoB, C, D, E, F, and G constitute the peripheral sector of the complex.

It is found in the cell inner membrane. The enzyme catalyses a quinone + NADH + 5 H(+)(in) = a quinol + NAD(+) + 4 H(+)(out). NDH-1 shuttles electrons from NADH, via FMN and iron-sulfur (Fe-S) centers, to quinones in the respiratory chain. The immediate electron acceptor for the enzyme in this species is believed to be ubiquinone. Couples the redox reaction to proton translocation (for every two electrons transferred, four hydrogen ions are translocated across the cytoplasmic membrane), and thus conserves the redox energy in a proton gradient. The polypeptide is NADH-quinone oxidoreductase subunit D (Neisseria meningitidis serogroup B (strain ATCC BAA-335 / MC58)).